A 550-amino-acid chain; its full sequence is Arginine--tRNA ligase (550 aa).

The short motif at 122-132 (GNPTGPLHLAH) is the 'HIGH' region element.

Belongs to the class-I aminoacyl-tRNA synthetase family. As to quaternary structure, monomer.

The protein localises to the cytoplasm. It carries out the reaction tRNA(Arg) + L-arginine + ATP = L-arginyl-tRNA(Arg) + AMP + diphosphate. The sequence is that of Arginine--tRNA ligase from Tropheryma whipplei (strain TW08/27) (Whipple's bacillus).